A 157-amino-acid polypeptide reads, in one-letter code: 6,7-dimethyl-8-ribityllumazine synthase (157 aa).

5-amino-6-(D-ribitylamino)uracil contacts are provided by residues Phe25, 59–61 (AME), and 83–85 (AII). 88–89 (ST) provides a ligand contact to (2S)-2-hydroxy-3-oxobutyl phosphate. His91 acts as the Proton donor in catalysis. Position 116 (Phe116) interacts with 5-amino-6-(D-ribitylamino)uracil. Arg130 serves as a coordination point for (2S)-2-hydroxy-3-oxobutyl phosphate.

The protein belongs to the DMRL synthase family.

It catalyses the reaction (2S)-2-hydroxy-3-oxobutyl phosphate + 5-amino-6-(D-ribitylamino)uracil = 6,7-dimethyl-8-(1-D-ribityl)lumazine + phosphate + 2 H2O + H(+). Its pathway is cofactor biosynthesis; riboflavin biosynthesis; riboflavin from 2-hydroxy-3-oxobutyl phosphate and 5-amino-6-(D-ribitylamino)uracil: step 1/2. Its function is as follows. Catalyzes the formation of 6,7-dimethyl-8-ribityllumazine by condensation of 5-amino-6-(D-ribitylamino)uracil with 3,4-dihydroxy-2-butanone 4-phosphate. This is the penultimate step in the biosynthesis of riboflavin. The polypeptide is 6,7-dimethyl-8-ribityllumazine synthase (Lawsonia intracellularis (strain PHE/MN1-00)).